Consider the following 365-residue polypeptide: Phosphatidylcholine:ceramide cholinephosphotransferase 4 (365 aa).

Residues 1–44 are Cytoplasmic-facing; sequence MISYPFFSLSPPGLVPPPMAVPPVEMYSGSFWNRMRKPLPLRTQ. Residues 45–65 form a helical membrane-spanning segment; sequence VIRFTVVFVIVSFILAVALQI. Residues 66–92 lie on the Lumenal side of the membrane; that stretch reads THERMPDPKVTKPLPDLGFELLTKVPG. The chain crosses the membrane as a helical span at residues 93-113; it reads MYVLADCCIGFLNILSVFTAF. The Cytoplasmic portion of the chain corresponds to 114–165; sequence KLYLLHRHCVGSGEPELPCNIPGVSRFFLSVWLCKENCRIELRNVHTIAWIR. Residues 166–186 traverse the membrane as a helical segment; that stretch reads FITSYALLLLFRSVVIVMTSL. Over 187-229 the chain is Lumenal; it reads PAPDDLCQDPPKIENPVKNVILTVLTAGGGSIHCGDLMYSGHT. The active site involves His-228. The chain crosses the membrane as a helical span at residues 230 to 250; it reads VILTLHLMFHWIYGAMVHWSF. Residue Arg-251 is a topological domain, cytoplasmic. The helical transmembrane segment at 252 to 272 threads the bilayer; it reads PVVTVVAIFGYYCIVASRFHY. Active-site residues include His-271 and Asp-275. Residues 273-275 lie on the Lumenal side of the membrane; the sequence is TDD. A helical membrane pass occupies residues 276–296; sequence VLVAIYLTIATFIAVGHNADG. Residues 297 to 365 are Cytoplasmic-facing; the sequence is APWQLQLFIR…ALMFKCGAYV (69 aa).

This sequence belongs to the sphingomyelin synthase family.

It is found in the golgi apparatus membrane. The catalysed reaction is an N-acylsphing-4-enine + a 1,2-diacyl-sn-glycero-3-phosphocholine = a sphingomyelin + a 1,2-diacyl-sn-glycerol. In terms of biological role, bidirectional lipid cholinephosphotransferase capable of converting phosphatidylcholine (PC) and ceramide to sphingomyelin (SM) and diacylglycerol (DAG) and vice versa. Direction is dependent on the relative concentrations of DAG and ceramide as phosphocholine acceptors. Directly and specifically recognizes the choline head group on the substrate. Also requires two fatty chains on the choline-P donor molecule in order to be recognized efficiently as a substrate. Does not function strictly as a SM synthase. Essential for viability of the pathogenic bloodstream stage of this human protozoan parasite and, consequently, can be considered as potential drug target. The chain is Phosphatidylcholine:ceramide cholinephosphotransferase 4 from Trypanosoma brucei brucei (strain 927/4 GUTat10.1).